The sequence spans 182 residues: 7-carboxy-7-deazaguanine synthase (182 aa).

Substrate contacts are provided by residues 12–14 and Arg-27; that span reads LQG. One can recognise a Radical SAM core domain in the interval 18–182; that stretch reads HTGTPAVFIR…LQTHKLIDIR (165 aa). Residues Cys-31, Cys-35, and Cys-38 each coordinate [4Fe-4S] cluster. Thr-40 provides a ligand contact to Mg(2+). Thr-68 contacts substrate. S-adenosyl-L-methionine contacts are provided by residues Gly-70 and 111-113; that span reads SPK.

The protein belongs to the radical SAM superfamily. 7-carboxy-7-deazaguanine synthase family. In terms of assembly, homodimer. The cofactor is [4Fe-4S] cluster. It depends on S-adenosyl-L-methionine as a cofactor. Requires Mg(2+) as cofactor.

The catalysed reaction is 6-carboxy-5,6,7,8-tetrahydropterin + H(+) = 7-carboxy-7-deazaguanine + NH4(+). It functions in the pathway purine metabolism; 7-cyano-7-deazaguanine biosynthesis. In terms of biological role, catalyzes the complex heterocyclic radical-mediated conversion of 6-carboxy-5,6,7,8-tetrahydropterin (CPH4) to 7-carboxy-7-deazaguanine (CDG), a step common to the biosynthetic pathways of all 7-deazapurine-containing compounds. The protein is 7-carboxy-7-deazaguanine synthase of Bacteroides thetaiotaomicron (strain ATCC 29148 / DSM 2079 / JCM 5827 / CCUG 10774 / NCTC 10582 / VPI-5482 / E50).